A 69-amino-acid polypeptide reads, in one-letter code: U2-agatoxin-Ao1w (69 aa).

Residues 1–20 (MRAIISLLLISAMVFSMIEA) form the signal peptide. Residues 21–34 (VPVEEGLQLFEGER) constitute a propeptide that is removed on maturation. Cystine bridges form between cysteine 37–cysteine 53, cysteine 44–cysteine 58, and cysteine 52–cysteine 68.

The protein belongs to the neurotoxin 01 (U2-agtx) family. Expressed by the venom gland.

It localises to the secreted. In terms of biological role, insect active toxin causing rapid but reversible paralysis in crickets. No activity shown in mammals. Does not show effect on mammalian voltage-gated calcium channels. The chain is U2-agatoxin-Ao1w from Agelena orientalis (Funnel-web spider).